The chain runs to 445 residues: MAVKKLFGTSGIRGKINSEVTCELALNVGKSLACYLGNEGTVVLGYDTRTTNVMLDQAICAGLLESGVDVIKIGMVPTPLVGYATDKLGADAGVMLTASHNPSQYNGIKIWNANGMAYTSAQEAKIEEIYSNESYTSVSWDKVGSLRVNEEIKGRYIDDLVGMVNIKPGLKVVIDCASGAGSEISPLVFRKAGCEVTTLNSQPDGFFPGRNPEPNAENLQNLMKTVVAIGADLGIAHDGDADRMITIDENGDISPFDSLLALMSKEFDGDIVTTVDAGLCMDESVKGNVLRTKVGDVNVAEVIIEKDAAFGGEPSGTWLHPDFCMCPDGILSGLRMAELVSNKGKLSELLLEIPSYPNIREKIICSKEAKTAVMENMEDLLKDSFDDIKEINSIDGVRLTFNDDSWVLVRPSGTEDYIRITLESKDSTKAQAIKETCVKIIKENI.

Serine 99 functions as the Phosphoserine intermediate in the catalytic mechanism. The Mg(2+) site is built by serine 99, aspartate 238, aspartate 240, and aspartate 242. Serine 99 bears the Phosphoserine mark.

Belongs to the phosphohexose mutase family. It depends on Mg(2+) as a cofactor. Activated by phosphorylation.

The enzyme catalyses alpha-D-glucosamine 1-phosphate = D-glucosamine 6-phosphate. Its function is as follows. Catalyzes the conversion of glucosamine-6-phosphate to glucosamine-1-phosphate. The sequence is that of Probable phosphoglucosamine mutase from Methanobrevibacter smithii (strain ATCC 35061 / DSM 861 / OCM 144 / PS).